Here is an 886-residue protein sequence, read N- to C-terminus: Protein translocase subunit SecA (886 aa).

Residues Gln85, Gly103–Thr107, and Asp492 contribute to the ATP site. The segment covering Arg841–Arg864 has biased composition (basic and acidic residues). Residues Arg841 to Asp866 are disordered. Cys868, Cys870, Cys879, and Cys880 together coordinate Zn(2+).

Belongs to the SecA family. In terms of assembly, monomer and homodimer. Part of the essential Sec protein translocation apparatus which comprises SecA, SecYEG and auxiliary proteins SecDF. Other proteins may also be involved. The cofactor is Zn(2+).

Its subcellular location is the cell membrane. It localises to the cytoplasm. The catalysed reaction is ATP + H2O + cellular proteinSide 1 = ADP + phosphate + cellular proteinSide 2.. Functionally, part of the Sec protein translocase complex. Interacts with the SecYEG preprotein conducting channel. Has a central role in coupling the hydrolysis of ATP to the transfer of proteins into and across the cell membrane, serving as an ATP-driven molecular motor driving the stepwise translocation of polypeptide chains across the membrane. This chain is Protein translocase subunit SecA, found in Pelotomaculum thermopropionicum (strain DSM 13744 / JCM 10971 / SI).